The following is a 296-amino-acid chain: Ribosomal RNA small subunit methyltransferase H (296 aa).

S-adenosyl-L-methionine-binding positions include 38–40, glutamate 57, phenylalanine 88, aspartate 103, and histidine 110; that span reads GAH.

Belongs to the methyltransferase superfamily. RsmH family.

It localises to the cytoplasm. The enzyme catalyses cytidine(1402) in 16S rRNA + S-adenosyl-L-methionine = N(4)-methylcytidine(1402) in 16S rRNA + S-adenosyl-L-homocysteine + H(+). Its function is as follows. Specifically methylates the N4 position of cytidine in position 1402 (C1402) of 16S rRNA. This is Ribosomal RNA small subunit methyltransferase H from Borreliella afzelii (strain PKo) (Borrelia afzelii).